The following is a 203-amino-acid chain: Fucoxanthin-chlorophyll a-c binding protein, chloroplastic (203 aa).

Residues 1–30 (MKLAIAALLAGSAAAFAPAQSGKASTALNM) constitute a chloroplast transit peptide.

Belongs to the fucoxanthin chlorophyll protein family. As to quaternary structure, the LHC complex of chromophytic algae is composed of fucoxanthin, chlorophyll A and C bound non-covalently by fucoxanthin chlorophyll proteins (FCPs). The ratio of pigments in this LHC is; fucoxanthin: chlorophyll C: chlorophyll A; (0.6-1): (0.1-0.3): (1).

The protein localises to the plastid. It is found in the chloroplast thylakoid membrane. In terms of biological role, the light-harvesting complex (LHC) functions as a light receptor, it captures and delivers excitation energy to photosystems with which it is closely associated. Energy is transferred from the carotenoid and chlorophyll C (or B) to chlorophyll A and the photosynthetic reaction centers where it is used to synthesize ATP and reducing power. The polypeptide is Fucoxanthin-chlorophyll a-c binding protein, chloroplastic (FCPA) (Trieres chinensis (Marine centric diatom)).